The chain runs to 86 residues: YcgL domain-containing protein XCC3997 (86 aa).

The YcgL domain maps to 1–83; the sequence is MHAYVYKSQR…PKTVVLAGEC (83 aa).

This is YcgL domain-containing protein XCC3997 from Xanthomonas campestris pv. campestris (strain ATCC 33913 / DSM 3586 / NCPPB 528 / LMG 568 / P 25).